The chain runs to 354 residues: Bergaptol O-methyltransferase (354 aa).

H121 is a bergaptol binding site. S-adenosyl-L-homocysteine contacts are provided by S174, G198, D221, and K255. H259 is a bergaptol binding site. The active-site Proton acceptor is the H259.

Belongs to the class I-like SAM-binding methyltransferase superfamily. Cation-independent O-methyltransferase family. COMT subfamily.

It catalyses the reaction a 5-hydroxyfurocoumarin + S-adenosyl-L-methionine = a 5-methoxyfurocoumarin + S-adenosyl-L-homocysteine + H(+). The catalysed reaction is bergaptol + S-adenosyl-L-methionine = bergapten + S-adenosyl-L-homocysteine. Inhibited by Cu(2+), Ni(2+) and Co(2+). In Ammi majus (Bishop's weed), this protein is Bergaptol O-methyltransferase.